Consider the following 246-residue polypeptide: Sugar fermentation stimulation protein homolog (246 aa).

Belongs to the SfsA family.

This Prochlorococcus marinus (strain MIT 9215) protein is Sugar fermentation stimulation protein homolog.